The chain runs to 311 residues: Malate dehydrogenase (311 aa).

Residues 7–13 (GAAGGIG) and Asp34 each bind NAD(+). Substrate is bound by residues Arg81 and Arg87. Residues Asn94 and 117 to 119 (ITN) contribute to the NAD(+) site. Positions 119 and 153 each coordinate substrate. The active-site Proton acceptor is His177. Met227 lines the NAD(+) pocket.

The protein belongs to the LDH/MDH superfamily. MDH type 1 family. As to quaternary structure, homodimer.

The catalysed reaction is (S)-malate + NAD(+) = oxaloacetate + NADH + H(+). Functionally, catalyzes the reversible oxidation of malate to oxaloacetate. In Haemophilus influenzae (strain 86-028NP), this protein is Malate dehydrogenase.